The sequence spans 1190 residues: Serine/threonine-protein kinase N (1190 aa).

3 consecutive REM-1 domains span residues 28–102 (NLPE…QILL), 142–219 (ALEG…NREQ), and 242–322 (SSQP…ELPA). The C2 domain occupies 359 to 515 (LGGKPYQSVS…MALQLEPQGL (157 aa)). Residues 395 to 404 (PGRSRRDKDN) show a composition bias toward basic and acidic residues. 4 disordered regions span residues 395–415 (PGRSRRDKDNNSSPGDLRSFV), 572–715 (HVHM…PPPP), 757–787 (PATPTIYGNSAAAGAPQFPQPAQRQEKQPPQ), and 811–832 (SPSSSTTSNSNQQQQQQRRNVA). Composition is skewed to low complexity over residues 576 to 588 (GSAGSGSSLTGSS) and 767 to 787 (AAAGAPQFPQPAQRQEKQPPQ). The Protein kinase domain occupies 863–1122 (FRLLSVLGRG…AEDVKKQAFF (260 aa)). Residues 869–877 (LGRGHFGKV) and Lys892 each bind ATP. Asp988 (proton acceptor) is an active-site residue. The AGC-kinase C-terminal domain occupies 1123–1190 (RSIVWDDLLL…QDFSYTAEWC (68 aa)).

It belongs to the protein kinase superfamily. Ser/Thr protein kinase family. Interacts (via N-terminus) with Rho1 (via REM repeats), Rac1 (via REM 1 repeat) and Rac2. In terms of processing, phosphorylated. Autophosphorylated; autophosphorylation is stimulated by GTP-bound Rho/Rac GTPases.

It localises to the cytoplasm. The protein resides in the nucleus. Its subcellular location is the membrane. It is found in the cell projection. The protein localises to the lamellipodium. It localises to the cytoskeleton. The protein resides in the cleavage furrow. Its subcellular location is the midbody. It is found in the cell junction. It catalyses the reaction L-seryl-[protein] + ATP = O-phospho-L-seryl-[protein] + ADP + H(+). The catalysed reaction is L-threonyl-[protein] + ATP = O-phospho-L-threonyl-[protein] + ADP + H(+). Its activity is regulated as follows. Activated by lipids, particularly cardiolipin and to a lesser extent by other acidic phospholipids and unsaturated fatty acids. Two specific sites, Thr-1022 (activation loop of the kinase domain) and Thr-1164 (turn motif), may be needed to be phosphorylated for its full activation. Kinase activity is activated upon binding to GTP-bound Rho/Rac GTPases. Pkc-related serine/threonine-protein kinase and Rho/Rac effector protein that participates in specific signal transduction responses in the cell. May play a role in the regulation of cell cycle progression, actin cytoskeleton assembly, cell migration, cell adhesion and transcription activation signaling processes. Plays a role in regulating Rho-mediated dorsal closure during embryogenesis. This is Serine/threonine-protein kinase N (Pkn) from Drosophila melanogaster (Fruit fly).